The primary structure comprises 320 residues: Ribosome production factor 2 homolog (320 aa).

Residues 30–234 (RTMLFLDGRK…IRRTKIASED (205 aa)) form the Brix domain. The disordered stretch occupies residues 268-320 (LGKQQTGSIQTRRVKALRKTPEEKKENRQRKKVALKAAAAEALASQGNNPFSS). The segment covering 302–311 (LKAAAAEALA) has biased composition (low complexity).

Belongs to the RPF2 family.

It localises to the nucleus. The protein localises to the nucleolus. Its function is as follows. Required for normal assembly of the mitotic spindle. May be involved in both centrosome-dependent and centrosome-independent spindle assembly programs. The protein is Ribosome production factor 2 homolog of Drosophila melanogaster (Fruit fly).